Reading from the N-terminus, the 44-residue chain is Photosystem I reaction center subunit IX (44 aa).

Residues 7–27 traverse the membrane as a helical segment; sequence YLSVAPVVSTIWFGALAGLLI.

It belongs to the PsaJ family.

It localises to the plastid. The protein localises to the chloroplast thylakoid membrane. Functionally, may help in the organization of the PsaE and PsaF subunits. This chain is Photosystem I reaction center subunit IX, found in Cucumis sativus (Cucumber).